The chain runs to 952 residues: Plasma membrane ATPase 4 (952 aa).

The Cytoplasmic segment spans residues 1-64 (MAKAISLEEI…EKNESKILKF (64 aa)). The helical transmembrane segment at 65–84 (LGFMWNPLSWVMEAAAVMAI) threads the bilayer. Topologically, residues 85 to 96 (ALANGDGKPPDW) are extracellular. A helical transmembrane segment spans residues 97–117 (QDFIGIICLLVINSTISFIEE). Residues 118 to 246 (NNAGNAAAAL…GHFQKVLTAI (129 aa)) lie on the Cytoplasmic side of the membrane. A helical membrane pass occupies residues 247–267 (GNFCICSIAIGMLVEIIVMYP). At 268-277 (IQHRKYRDGI) the chain is on the extracellular side. The helical transmembrane segment at 278 to 299 (DNLLVLLIGGIPIAMPTVLSVT) threads the bilayer. Residues 300 to 646 (MAIGSHRLSQ…TSRAIFQRMK (347 aa)) lie on the Cytoplasmic side of the membrane. Asp-332 acts as the 4-aspartylphosphate intermediate in catalysis. Mg(2+) is bound by residues Asp-591 and Asp-595. Residues 647–668 (NYTIYAVSITIRIVFGFMFIAL) traverse the membrane as a helical segment. The Extracellular portion of the chain corresponds to 669–673 (IWKYD). Residues 674–696 (FSAFMVLIIAILNDGTIMTISKD) form a helical membrane-spanning segment. The Cytoplasmic portion of the chain corresponds to 697 to 712 (RVKPSPMPDSWKLKEI). The chain crosses the membrane as a helical span at residues 713–733 (FATGVVLGGYQALMTVVFFWA). Over 734-754 (MHDTDFFSDKFGVKSLRNSDE) the chain is Extracellular. A helical membrane pass occupies residues 755-775 (EMMSALYLQVSIISQALIFVT). Topologically, residues 776-787 (RSRSWSFLERPG) are cytoplasmic. Residues 788-808 (MLLVIAFMIAQLVATLIAVYA) form a helical membrane-spanning segment. Over 809 to 817 (NWAFARVKG) the chain is Extracellular. Residues 818 to 838 (CGWGWAGVIWLYSIIFYLPLD) form a helical membrane-spanning segment. At 839 to 952 (IMKFAIRYIL…IETIQQHYTV (114 aa)) the chain is on the cytoplasmic side.

This sequence belongs to the cation transport ATPase (P-type) (TC 3.A.3) family. Type IIIA subfamily. In terms of tissue distribution, expressed at high levels in root, stem, leaf and flower.

Its subcellular location is the cell membrane. The enzyme catalyses ATP + H2O + H(+)(in) = ADP + phosphate + 2 H(+)(out). Functionally, the plasma membrane ATPase of plants and fungi is a hydrogen ion pump. The proton gradient it generates drives the active transport of nutrients by H(+)-symport. The resulting external acidification and/or internal alkinization may mediate growth responses. The sequence is that of Plasma membrane ATPase 4 (PMA4) from Nicotiana plumbaginifolia (Leadwort-leaved tobacco).